The following is a 1439-amino-acid chain: Probable histone acetyltransferase HAC-like 2 (1439 aa).

Disordered stretches follow at residues 1-43 (MKQG…ASAD) and 313-335 (YGIS…TPTP). Polar residues predominate over residues 325-335 (VNPSTRSTPTP). The TAZ-type zinc finger occupies 607–687 (ENTKQYHAQA…NEHCHVCCKA (81 aa)). The segment at 827 to 933 (KIHCHVQQET…EYTCFKCYIE (107 aa)) adopts a PHD-type; degenerate zinc-finger fold. A CBP/p300-type HAT domain is found at 948–1383 (VRGAKDLPRT…MLYHLHNPTG (436 aa)). Residues 964 to 989 (EERLFKRLREERQERANKLKTSLDEV) adopt a coiled-coil conformation. Residues 1071-1073 (LDS), 1090-1091 (RT), and W1146 contribute to the acetyl-CoA site. A ZZ-type zinc finger spans residues 1265–1328 (HLQYSCSHCC…ILHPVEIVGV (64 aa)). Positions 1270, 1273, 1285, 1288, 1294, 1297, 1310, and 1318 each coordinate Zn(2+).

It localises to the nucleus. It catalyses the reaction L-lysyl-[protein] + acetyl-CoA = N(6)-acetyl-L-lysyl-[protein] + CoA + H(+). Acetyltransferase enzyme. Acetylates histones, giving a specific tag for transcriptional activation. This is Probable histone acetyltransferase HAC-like 2 from Oryza sativa subsp. japonica (Rice).